The chain runs to 153 residues: Large ribosomal subunit protein bL9 (153 aa).

Belongs to the bacterial ribosomal protein bL9 family.

In terms of biological role, binds to the 23S rRNA. The polypeptide is Large ribosomal subunit protein bL9 (Synechococcus sp. (strain JA-3-3Ab) (Cyanobacteria bacterium Yellowstone A-Prime)).